Reading from the N-terminus, the 217-residue chain is Protein-L-isoaspartate O-methyltransferase 2 (217 aa).

Residue Ser-64 is part of the active site.

Belongs to the methyltransferase superfamily. L-isoaspartyl/D-aspartyl protein methyltransferase family.

The protein resides in the cytoplasm. The enzyme catalyses [protein]-L-isoaspartate + S-adenosyl-L-methionine = [protein]-L-isoaspartate alpha-methyl ester + S-adenosyl-L-homocysteine. Functionally, catalyzes the methyl esterification of L-isoaspartyl residues in peptides and proteins that result from spontaneous decomposition of normal L-aspartyl and L-asparaginyl residues. It plays a role in the repair and/or degradation of damaged proteins. The polypeptide is Protein-L-isoaspartate O-methyltransferase 2 (Rhodopseudomonas palustris (strain HaA2)).